Reading from the N-terminus, the 349-residue chain is D-arabinose 1-dehydrogenase (NADP(+)) (349 aa).

Cys-46, His-70, Asp-99, Cys-102, Cys-105, Cys-113, and Asp-155 together coordinate Zn(2+).

The protein belongs to the zinc-containing alcohol dehydrogenase family. Homotetramer. Dimer of dimers. Zn(2+) serves as cofactor.

The enzyme catalyses D-arabinose + NADP(+) = D-arabinono-1,4-lactone + NADPH + H(+). Participates in a pentose oxidation pathway that converts D-arabinose to 2-oxoglutarate. Catalyzes the NADP-dependent conversion of D-arabinose to D-arabinono-1,4-lactone. In vitro, can also use L-fucose, L-galactose and D-ribose. Shows highest activity with L-fucose, in combinaison with NAD, and lower activity toward L-galactose and D-ribose. When acting on its physiological substrate, D-arabinose, shows a clear preference for NADP over NAD. This is D-arabinose 1-dehydrogenase (NADP(+)) from Saccharolobus solfataricus (strain ATCC 35092 / DSM 1617 / JCM 11322 / P2) (Sulfolobus solfataricus).